Reading from the N-terminus, the 140-residue chain is Putative pre-16S rRNA nuclease (140 aa).

It belongs to the YqgF nuclease family.

It is found in the cytoplasm. In terms of biological role, could be a nuclease involved in processing of the 5'-end of pre-16S rRNA. The protein is Putative pre-16S rRNA nuclease of Halothermothrix orenii (strain H 168 / OCM 544 / DSM 9562).